Reading from the N-terminus, the 701-residue chain is Serologically defined colon cancer antigen 8 homolog (701 aa).

Acidic residues predominate over residues 1 to 13 (MKPSLESDEEEEL). Disordered stretches follow at residues 1–67 (MKPS…VQQS) and 84–114 (ANIQ…GVHN). The span at 45–67 (SEPNQQELLSSVQQNPCSPVQQS) shows a compositional bias: polar residues. Coiled coils occupy residues 119–173 (INNQ…LKEY), 203–258 (HKWR…AVAA), and 323–695 (QQVK…AGKR). The tract at residues 364–387 (LASEQDKISQAREAARSESKKERE) is disordered.

The protein resides in the cytoplasm. Its subcellular location is the cytoskeleton. The protein localises to the microtubule organizing center. It localises to the centrosome. It is found in the centriole. The protein resides in the cilium basal body. Its subcellular location is the cell junction. Its function is as follows. Plays a role in the establishment of cell polarity and epithelial lumen formation. Also plays an essential role in ciliogenesis and subsequent Hedgehog signaling pathway that requires the presence of intact primary cilia for pathway activation. Mechanistically, interacts with and mediates RABEP2 centrosomal localization which is critical for ciliogenesis. This chain is Serologically defined colon cancer antigen 8 homolog (Sdccag8), found in Danio rerio (Zebrafish).